We begin with the raw amino-acid sequence, 167 residues long: Mediator of RNA polymerase II transcription subunit 10 (167 aa).

Positions 54-92 (STHTKPHPPPPPPPQPTDPTTAAAPALRDNPDPPLSSIQ) are disordered. Residues 60-70 (HPPPPPPPQPT) are compositionally biased toward pro residues.

Belongs to the Mediator complex subunit 10 family. In terms of assembly, component of the Mediator complex.

The protein resides in the nucleus. Functionally, component of the Mediator complex, a coactivator involved in the regulated transcription of nearly all RNA polymerase II-dependent genes. Mediator functions as a bridge to convey information from gene-specific regulatory proteins to the basal RNA polymerase II transcription machinery. Mediator is recruited to promoters by direct interactions with regulatory proteins and serves as a scaffold for the assembly of a functional preinitiation complex with RNA polymerase II and the general transcription factors. The chain is Mediator of RNA polymerase II transcription subunit 10 (nut2) from Aspergillus clavatus (strain ATCC 1007 / CBS 513.65 / DSM 816 / NCTC 3887 / NRRL 1 / QM 1276 / 107).